The chain runs to 367 residues: Peptide chain release factor 2 (367 aa).

At glutamine 254 the chain carries N5-methylglutamine.

It belongs to the prokaryotic/mitochondrial release factor family. Post-translationally, methylated by PrmC. Methylation increases the termination efficiency of RF2.

It is found in the cytoplasm. Its function is as follows. Peptide chain release factor 2 directs the termination of translation in response to the peptide chain termination codons UGA and UAA. This Leptospira interrogans serogroup Icterohaemorrhagiae serovar Lai (strain 56601) protein is Peptide chain release factor 2.